Reading from the N-terminus, the 55-residue chain is Protein SOX-19 (55 aa).

The HMG box DNA-binding region spans 1–55 (MVWSQIERRKIMEQWPDMHNAEISKRLGKRWKLLPDYEKIPFIKEAERLRLKHMA).

Its subcellular location is the nucleus. This Mus musculus (Mouse) protein is Protein SOX-19 (Sox19).